The sequence spans 432 residues: 5-methylthioadenosine/S-adenosylhomocysteine deaminase (432 aa).

The Zn(2+) site is built by H62 and H64. Residues E91 and H184 each coordinate substrate. A Zn(2+)-binding site is contributed by H211. Substrate is bound by residues E214 and D299. Position 299 (D299) interacts with Zn(2+).

The protein belongs to the metallo-dependent hydrolases superfamily. MTA/SAH deaminase family. The cofactor is Zn(2+).

The enzyme catalyses S-adenosyl-L-homocysteine + H2O + H(+) = S-inosyl-L-homocysteine + NH4(+). It carries out the reaction S-methyl-5'-thioadenosine + H2O + H(+) = S-methyl-5'-thioinosine + NH4(+). Functionally, catalyzes the deamination of 5-methylthioadenosine and S-adenosyl-L-homocysteine into 5-methylthioinosine and S-inosyl-L-homocysteine, respectively. Is also able to deaminate adenosine. The polypeptide is 5-methylthioadenosine/S-adenosylhomocysteine deaminase (Haloarcula marismortui (strain ATCC 43049 / DSM 3752 / JCM 8966 / VKM B-1809) (Halobacterium marismortui)).